Reading from the N-terminus, the 218-residue chain is Deoxyribose-phosphate aldolase (218 aa).

D89 acts as the Proton donor/acceptor in catalysis. K152 (schiff-base intermediate with acetaldehyde) is an active-site residue. K182 acts as the Proton donor/acceptor in catalysis.

The protein belongs to the DeoC/FbaB aldolase family. DeoC type 1 subfamily.

It is found in the cytoplasm. The catalysed reaction is 2-deoxy-D-ribose 5-phosphate = D-glyceraldehyde 3-phosphate + acetaldehyde. Its pathway is carbohydrate degradation; 2-deoxy-D-ribose 1-phosphate degradation; D-glyceraldehyde 3-phosphate and acetaldehyde from 2-deoxy-alpha-D-ribose 1-phosphate: step 2/2. Catalyzes a reversible aldol reaction between acetaldehyde and D-glyceraldehyde 3-phosphate to generate 2-deoxy-D-ribose 5-phosphate. This is Deoxyribose-phosphate aldolase from Kocuria rhizophila (strain ATCC 9341 / DSM 348 / NBRC 103217 / DC2201).